The sequence spans 228 residues: uncharacterized protein (228 aa).

5 consecutive transmembrane segments (helical) span residues 14-34 (HTIS…MLLA), 42-62 (VALF…AITL), 130-150 (FMFS…LVGS), 156-176 (FSFD…VLFM), and 192-212 (IAIA…LIAL).

The protein belongs to the AzlC family.

It localises to the cell membrane. This is an uncharacterized protein from Helicobacter pylori (strain J99 / ATCC 700824) (Campylobacter pylori J99).